Reading from the N-terminus, the 157-residue chain is Probable succinate transporter subunit YjjB (157 aa).

Helical transmembrane passes span 8–28, 57–77, 87–107, and 129–149; these read FALA…AMVF, LNIE…GIQW, VFTV…TAMI, and FLTA…PGLW.

This sequence belongs to the ThrE exporter (TC 2.A.79) family. In terms of assembly, the transporter is composed of YjjB and YjjP.

The protein resides in the cell inner membrane. Involved in succinate export with YjjP. Both proteins are required for export. The polypeptide is Probable succinate transporter subunit YjjB (Shigella boydii serotype 4 (strain Sb227)).